We begin with the raw amino-acid sequence, 246 residues long: MEEAKSQSLEEDFEGQATHTGPKGVINDWRKFKLESQDSDSIPPSKKEILRQMSSPQSRNGKDSKERVSRKMSIQEYELIHKEKEDENCLRKYRRQCMQDMHQKLSFGPRYGFVYELETGKQFLETIEKELKITTIVVHIYEDGIKGCDALNSSLTCLAAEYPIVKFCKIKASNTGAGDRFSLDVLPTLLIYKGGELISNFISVAEQFAEEFFAGDVESFLNEYGLLPEREVHVLEHTKIEEEDVE.

Positions 1-14 are enriched in acidic residues; the sequence is MEEAKSQSLEEDFE. A disordered region spans residues 1 to 70; that stretch reads MEEAKSQSLE…GKDSKERVSR (70 aa). Residues 1 to 244 form the Phosducin domain; that stretch reads MEEAKSQSLE…LEHTKIEEED (244 aa). A compositionally biased stretch (basic and acidic residues) spans 60 to 69; that stretch reads NGKDSKERVS. Ser-73 carries the post-translational modification Phosphoserine; by PKA. Residues 111-246 are thioredoxin fold; the sequence is YGFVYELETG…HTKIEEEDVE (136 aa).

This sequence belongs to the phosducin family. As to quaternary structure, forms a complex with the beta and gamma subunits of the GTP-binding protein, transducin. Interacts with CRX. Post-translationally, light-induced changes in cyclic nucleotide levels modulate the phosphorylation of this protein by cAMP kinase.

The protein localises to the cytoplasm. Its subcellular location is the cytosol. It is found in the nucleus. It localises to the cell projection. The protein resides in the cilium. The protein localises to the photoreceptor outer segment. Its subcellular location is the photoreceptor inner segment. Its function is as follows. May participate in the regulation of visual phototransduction or in the integration of photoreceptor metabolism. Inhibits the transcriptional activation activity of the cone-rod homeobox CRX. The protein is Phosducin (PDC) of Homo sapiens (Human).